A 100-amino-acid chain; its full sequence is Large ribosomal subunit protein bL28 (100 aa).

Belongs to the bacterial ribosomal protein bL28 family.

The chain is Large ribosomal subunit protein bL28 from Gluconobacter oxydans (strain 621H) (Gluconobacter suboxydans).